A 514-amino-acid chain; its full sequence is tRNA-2-methylthio-N(6)-dimethylallyladenosine synthase (514 aa).

The segment at 1 to 21 is disordered; it reads MNEEQRKASSVDVLAERDKKA. The MTTase N-terminal domain occupies 68 to 186; sequence RTFLIKTYGC…LPEILEEAYL (119 aa). The [4Fe-4S] cluster site is built by Cys77, Cys113, Cys147, Cys223, Cys227, and Cys230. In terms of domain architecture, Radical SAM core spans 209–440; the sequence is REGNIKAWVN…KKVGHYSQIA (232 aa). One can recognise a TRAM domain in the interval 442-505; that stretch reads SKYEGQTVTV…QYSLNGSFVK (64 aa).

This sequence belongs to the methylthiotransferase family. MiaB subfamily. Monomer. It depends on [4Fe-4S] cluster as a cofactor.

The protein localises to the cytoplasm. The catalysed reaction is N(6)-dimethylallyladenosine(37) in tRNA + (sulfur carrier)-SH + AH2 + 2 S-adenosyl-L-methionine = 2-methylsulfanyl-N(6)-dimethylallyladenosine(37) in tRNA + (sulfur carrier)-H + 5'-deoxyadenosine + L-methionine + A + S-adenosyl-L-homocysteine + 2 H(+). Functionally, catalyzes the methylthiolation of N6-(dimethylallyl)adenosine (i(6)A), leading to the formation of 2-methylthio-N6-(dimethylallyl)adenosine (ms(2)i(6)A) at position 37 in tRNAs that read codons beginning with uridine. The protein is tRNA-2-methylthio-N(6)-dimethylallyladenosine synthase of Staphylococcus aureus (strain N315).